The following is a 772-amino-acid chain: MKISDGNWLIQPGLNLIHPLQVFEVEQQDNEMVVYAAPRDVRERTWQLDTPLFTLRFFSPQEGIVGVRIEHFQGALNNGPHYPLNILQDVKVTIENTERYAEFKSGNLSARVSKGEFWSLDFLRNGERITGSQVKNNGYVQDTNNQRNYMFERLDLGVGETVYGLGERFTALVRNGQTVETWNRDGGTSTEQAYKNIPFYMTNRGYGVLVNHPQCVSFEVGSEKVSKVQFSVESEYLEYFVIDGPTPKAVLDRYTRFTGRPALPPAWSFGLWLTTSFTTNYDEATVNSFIDGMAERNLPLHVFHFDCFWMKAFQWCDFEWDPLTFPDPEGMIRRLKAKGLKICVWINPYIGQKSPVFKELQEKGYLLKRPDGSLWQWDKWQPGLAIYDFTNPDACKWYADKLKGLVAMGVDCFKTDFGERIPTDVQWFDGSDPQKMHNHYAYIYNELVWNVLKDTVGEEEAVLFARSASVGAQKFPVHWGGDCYANYESMAESLRGGLSIGLSGFGFWSHDIGGFENTAPAHVYKRWCAFGLLSSHSRLHGSKSYRVPWAYDDESCDVVRFFTQLKCRMMPYLYREAARANARGTPMMRAMMMEFPDDPACDYLDRQYMLGDNVMVAPVFTEAGDVQFYLPEGRWTHLWHNDELDGSRWHKQQHGFLSLPVYVRDNTLLALGNNDQRPDYVWHEGTAFHLFNLQDGHEAVCEVPAADGSVIFTLKAARTGNTITVTGAGEAKNWTLCLRNVVKVNGLQDGSQAESEQGLVVKPQGNALTITL.

Asp-416 (nucleophile) is an active-site residue. The active site involves Glu-419. Asp-482 functions as the Proton donor in the catalytic mechanism.

It belongs to the glycosyl hydrolase 31 family. As to quaternary structure, homohexamer.

It catalyses the reaction Hydrolysis of terminal, non-reducing alpha-D-xylose residues with release of alpha-D-xylose.. Can catalyze the transfer of alpha-xylosyl residue from alpha-xyloside to xylose, glucose, mannose, fructose, maltose, isomaltose, nigerose, kojibiose, sucrose and trehalose. The sequence is that of Alpha-xylosidase (yicI) from Escherichia coli (strain K12).